The following is a 142-amino-acid chain: Hemoglobin subunit alpha-1 (142 aa).

Residues 2–142 form the Globin domain; it reads KLTAEDKHNV…VAYVLASKYR (141 aa). His-59 contacts O2. His-88 is a heme b binding site.

It belongs to the globin family. Major hemoglobin is a heterotetramer of two alpha-1 chains and two beta-1 chains. As to expression, red blood cells.

Functionally, involved in oxygen transport from the lung to the various peripheral tissues. The sequence is that of Hemoglobin subunit alpha-1 from Pleurodeles waltl (Iberian ribbed newt).